Consider the following 122-residue polypeptide: Large ribosomal subunit protein eL34 (122 aa).

Belongs to the eukaryotic ribosomal protein eL34 family. As to quaternary structure, component of the large ribosomal subunit. Mature ribosomes consist of a small (40S) and a large (60S) subunit. The 40S subunit contains about 32 different proteins and 1 molecule of RNA (18S). The 60S subunit contains 45 different proteins and 3 molecules of RNA (25S, 5.8S and 5S).

It localises to the cytoplasm. Component of the ribosome, a large ribonucleoprotein complex responsible for the synthesis of proteins in the cell. The small ribosomal subunit (SSU) binds messenger RNAs (mRNAs) and translates the encoded message by selecting cognate aminoacyl-transfer RNA (tRNA) molecules. The large subunit (LSU) contains the ribosomal catalytic site termed the peptidyl transferase center (PTC), which catalyzes the formation of peptide bonds, thereby polymerizing the amino acids delivered by tRNAs into a polypeptide chain. The nascent polypeptides leave the ribosome through a tunnel in the LSU and interact with protein factors that function in enzymatic processing, targeting, and the membrane insertion of nascent chains at the exit of the ribosomal tunnel. The chain is Large ribosomal subunit protein eL34 from Candida albicans (strain SC5314 / ATCC MYA-2876) (Yeast).